A 123-amino-acid polypeptide reads, in one-letter code: Putative acidic leucine-rich nuclear phosphoprotein 32 family member C (123 aa).

LRR repeat units follow at residues 43–64 (ELEF…PKLN), 65–87 (KLKK…AEKC), 89–110 (NLKH…ELLK), and 114–123 (NLKSLDLFNC).

Belongs to the ANP32 family.

The polypeptide is Putative acidic leucine-rich nuclear phosphoprotein 32 family member C (Anp32c) (Mus musculus (Mouse)).